The following is a 335-amino-acid chain: Dihydroorotate dehydrogenase (quinone) (335 aa).

Residues 59–63 and Thr-83 contribute to the FMN site; that span reads AGLDK. Substrate is bound at residue Lys-63. 108–112 contributes to the substrate binding site; the sequence is NRMGF. The FMN site is built by Asn-136 and Asn-169. Asn-169 contacts substrate. Ser-172 serves as the catalytic Nucleophile. Asn-174 lines the substrate pocket. Residues Lys-214 and Thr-242 each contribute to the FMN site. Residue 243–244 coordinates substrate; sequence NT. Residues Gly-265, Gly-294, and 315–316 contribute to the FMN site; that span reads YS.

Belongs to the dihydroorotate dehydrogenase family. Type 2 subfamily. As to quaternary structure, monomer. It depends on FMN as a cofactor.

The protein localises to the cell membrane. It catalyses the reaction (S)-dihydroorotate + a quinone = orotate + a quinol. Its pathway is pyrimidine metabolism; UMP biosynthesis via de novo pathway; orotate from (S)-dihydroorotate (quinone route): step 1/1. In terms of biological role, catalyzes the conversion of dihydroorotate to orotate with quinone as electron acceptor. The sequence is that of Dihydroorotate dehydrogenase (quinone) from Neisseria meningitidis serogroup A / serotype 4A (strain DSM 15465 / Z2491).